The chain runs to 1342 residues: DNA-directed RNA polymerase subunit beta (1342 aa).

This sequence belongs to the RNA polymerase beta chain family. As to quaternary structure, the RNAP catalytic core consists of 2 alpha, 1 beta, 1 beta' and 1 omega subunit. When a sigma factor is associated with the core the holoenzyme is formed, which can initiate transcription.

The catalysed reaction is RNA(n) + a ribonucleoside 5'-triphosphate = RNA(n+1) + diphosphate. DNA-dependent RNA polymerase catalyzes the transcription of DNA into RNA using the four ribonucleoside triphosphates as substrates. The sequence is that of DNA-directed RNA polymerase subunit beta from Salmonella typhimurium (strain LT2 / SGSC1412 / ATCC 700720).